A 392-amino-acid chain; its full sequence is Cytochrome P450 monooxygenase ppzE (392 aa).

The chain crosses the membrane as a helical span at residues 10-30 (LELVWFVALYPFACWTLFAVL). N319 carries an N-linked (GlcNAc...) asparagine glycan. C353 lines the heme pocket. The N-linked (GlcNAc...) asparagine glycan is linked to N372.

This sequence belongs to the cytochrome P450 family. Requires heme as cofactor.

It is found in the membrane. The protein operates within secondary metabolite biosynthesis. Its function is as follows. Cytochrome P450 monooxygenase; part of the gene cluster that mediates the biosynthesis of pyrrolopyrazines, secondary metabolites showing insecticidal activity. The role of ppzE within the pathway has still to be determined. The single multifunctional NRPS ppzA is sufficient to produce peramine via condensation of 1-pyrroline-5-carboxylate and arginine, N-methylation of the alpha-amino group of arginine and reduction of the thioester and the cyclization to form an iminium ion resulting in release from the peptide synthetase. Deprotonation of this intermediate and oxidation of the pyrroline ring would give rise to peramine. In Epichloe species that produce only peramine, the peramine synthetase gene is not localized in a gene cluster, in contrast to Metarhizium species that contain additional pyrrolopyrazine biosynthesis genes. The 2-oxoglutarate-Fe(II) type oxidoreductase ppzC hydroxylates peramine to yield the newly identified compound 8-hydroxyperamine whereas ppzD converts L-proline into trans-4-hydroxy-L-proline, a precursor of peramine biosynthesis. The polypeptide is Cytochrome P450 monooxygenase ppzE (Metarhizium rileyi (strain RCEF 4871) (Nomuraea rileyi)).